Reading from the N-terminus, the 750-residue chain is GTP pyrophosphokinase rsh (750 aa).

Residues 45 to 144 (YFSHPLEVAA…VKLADRLHNM (100 aa)) enclose the HD domain. Residues 390 to 451 (DQVFCFTPKG…KNGDEVDIIR (62 aa)) form the TGS domain. The segment at 587-613 (AAKVDPAATTPKPGKRALPIRGTNPDL) is disordered. Residues 676–750 (RISVSAINSP…SVSSAKRVNG (75 aa)) form the ACT domain.

It belongs to the RelA/SpoT family.

The catalysed reaction is GTP + ATP = guanosine 3'-diphosphate 5'-triphosphate + AMP. In terms of biological role, functions as a (p)ppGpp synthase. In eubacteria ppGpp (guanosine 3'-diphosphate 5'-diphosphate) is a mediator of the stringent response that coordinates a variety of cellular activities in response to changes in nutritional abundance. Plays a role in adaptation of Brucella to its intracellular host environment. The sequence is that of GTP pyrophosphokinase rsh (rsh) from Brucella abortus (strain 2308).